The primary structure comprises 382 residues: Histidinol-phosphate aminotransferase (382 aa).

Lysine 215 is subject to N6-(pyridoxal phosphate)lysine. Residues 363–382 are disordered; that stretch reads NIDNQSKTHSQTSSIRKGTI.

This sequence belongs to the class-II pyridoxal-phosphate-dependent aminotransferase family. Histidinol-phosphate aminotransferase subfamily. Homodimer. Pyridoxal 5'-phosphate serves as cofactor.

The enzyme catalyses L-histidinol phosphate + 2-oxoglutarate = 3-(imidazol-4-yl)-2-oxopropyl phosphate + L-glutamate. Its pathway is amino-acid biosynthesis; L-histidine biosynthesis; L-histidine from 5-phospho-alpha-D-ribose 1-diphosphate: step 7/9. The chain is Histidinol-phosphate aminotransferase from Yersinia pseudotuberculosis serotype O:1b (strain IP 31758).